The primary structure comprises 446 residues: Alkylglycerol monooxygenase (446 aa).

Transmembrane regions (helical) follow at residues 39–59 (VNQATPYFIGLILLEIVLGWL) and 103–123 (FHFLELPWDSAWTWWLAFLGV). The region spanning 117-248 (WLAFLGVDMG…LIIWDRMFGT (132 aa)) is the Fatty acid hydroxylase domain. Residues 131 to 135 (HRFAH) carry the Histidine box-1 motif. A Histidine box-2 motif is present at residues 144 to 148 (HQVHH). Residues 167–187 (FSSWIFYSPLALLIPPSVFAV) form a helical membrane-spanning segment. Residues 220–224 (HRVHH) carry the Histidine box-3 motif. 3 helical membrane-spanning segments follow: residues 329-349 (AWSPVMQAYVILQFFLLLDVY), 362-382 (LTVILLTAYVLLSLTSLGFLI), and 410-430 (PLLPALAFPMEAFILISTIYW).

Belongs to the sterol desaturase family. TMEM195 subfamily. The cofactor is Fe cation.

Its subcellular location is the endoplasmic reticulum membrane. The catalysed reaction is 1-O-(1,2-saturated-alkyl)-sn-glycerol + (6R)-L-erythro-5,6,7,8-tetrahydrobiopterin + O2 = a 1-(1-hydroxyalkyl)-sn-glycerol + (6R)-L-erythro-6,7-dihydrobiopterin + H2O. Its function is as follows. Glyceryl-ether monooxygenase that cleaves the O-alkyl bond of ether lipids. Ether lipids are essential components of brain membranes. This Danio rerio (Zebrafish) protein is Alkylglycerol monooxygenase (agmo).